A 437-amino-acid polypeptide reads, in one-letter code: Serine--tRNA ligase (437 aa).

An L-serine-binding site is contributed by 244–246 (TAE). 275–277 (RSE) provides a ligand contact to ATP. An L-serine-binding site is contributed by glutamate 298. Position 362–365 (362–365 (EISS)) interacts with ATP. L-serine is bound at residue serine 397.

Belongs to the class-II aminoacyl-tRNA synthetase family. Type-1 seryl-tRNA synthetase subfamily. In terms of assembly, homodimer. The tRNA molecule binds across the dimer.

Its subcellular location is the cytoplasm. The catalysed reaction is tRNA(Ser) + L-serine + ATP = L-seryl-tRNA(Ser) + AMP + diphosphate + H(+). It catalyses the reaction tRNA(Sec) + L-serine + ATP = L-seryl-tRNA(Sec) + AMP + diphosphate + H(+). The protein operates within aminoacyl-tRNA biosynthesis; selenocysteinyl-tRNA(Sec) biosynthesis; L-seryl-tRNA(Sec) from L-serine and tRNA(Sec): step 1/1. In terms of biological role, catalyzes the attachment of serine to tRNA(Ser). Is also able to aminoacylate tRNA(Sec) with serine, to form the misacylated tRNA L-seryl-tRNA(Sec), which will be further converted into selenocysteinyl-tRNA(Sec). The polypeptide is Serine--tRNA ligase (Nitrosomonas eutropha (strain DSM 101675 / C91 / Nm57)).